Reading from the N-terminus, the 239-residue chain is Ribosomal RNA small subunit methyltransferase G (239 aa).

Residues Gly77, Phe82, 128–129, and Arg146 each bind S-adenosyl-L-methionine; that span reads AE. Residues 215–239 form a disordered region; it reads DKKRQTPKKYPRKPGTPNKTPLLEK.

The protein belongs to the methyltransferase superfamily. RNA methyltransferase RsmG family.

The protein resides in the cytoplasm. Functionally, specifically methylates the N7 position of guanine in position 535 of 16S rRNA. This Staphylococcus aureus (strain bovine RF122 / ET3-1) protein is Ribosomal RNA small subunit methyltransferase G.